The primary structure comprises 148 residues: Hemoglobin subunit beta (148 aa).

The Globin domain maps to 3 to 148; that stretch reads XWTDXERHVI…AVAALGKQYH (146 aa). Residues His-64 and His-93 each coordinate heme b.

This sequence belongs to the globin family. As to quaternary structure, heterotetramer of two alpha chains and two beta chains. As to expression, red blood cells.

In terms of biological role, involved in oxygen transport from gills to the various peripheral tissues. The sequence is that of Hemoglobin subunit beta (hbb) from Silurus asotus (Amur catfish).